The sequence spans 589 residues: Vomeromodulin (589 aa).

An N-terminal signal peptide occupies residues M1 to S29. 2 disordered regions span residues G49 to G71 and L146 to Q170. N-linked (GlcNAc...) asparagine glycans are attached at residues N419 and N437.

N-glycosylated. The N-glycans consist mainly of complex sialylated and fucosylated biantennary structures. Abundant in the lateral nasal glands. Also present in the posterior septal and vomeronasal glands.

Its subcellular location is the secreted. The chain is Vomeromodulin from Rattus norvegicus (Rat).